A 354-amino-acid chain; its full sequence is Uroporphyrinogen decarboxylase (354 aa).

Substrate contacts are provided by residues Arg-27 to Arg-31, Asp-77, Tyr-154, Thr-209, and His-327.

It belongs to the uroporphyrinogen decarboxylase family. As to quaternary structure, homodimer.

It localises to the cytoplasm. The enzyme catalyses uroporphyrinogen III + 4 H(+) = coproporphyrinogen III + 4 CO2. It functions in the pathway porphyrin-containing compound metabolism; protoporphyrin-IX biosynthesis; coproporphyrinogen-III from 5-aminolevulinate: step 4/4. Catalyzes the decarboxylation of four acetate groups of uroporphyrinogen-III to yield coproporphyrinogen-III. In Citrobacter koseri (strain ATCC BAA-895 / CDC 4225-83 / SGSC4696), this protein is Uroporphyrinogen decarboxylase.